A 468-amino-acid chain; its full sequence is Hexokinase (468 aa).

In terms of domain architecture, Hexokinase spans 10–466; it reads AKQLAELEVV…SGKGAALIAD (457 aa). The hexokinase small subdomain stretch occupies residues 74–225; the sequence is TGAEVGEAYA…NVPAVCKAIV (152 aa). An ATP-binding site is contributed by 85-90; sequence DFGGST. The glucose-binding stretch occupies residues 163-189; it reads PVGFTFSFPCAQAALNSSFLIEWTKGF. Residues 226–455 form a hexokinase large subdomain region; the sequence is NDTVGTLVSC…KNIHYCIADD (230 aa).

This sequence belongs to the hexokinase family.

The enzyme catalyses a D-hexose + ATP = a D-hexose 6-phosphate + ADP + H(+). It carries out the reaction D-mannose + ATP = D-mannose 6-phosphate + ADP + H(+). It catalyses the reaction D-fructose + ATP = D-fructose 6-phosphate + ADP + H(+). The catalysed reaction is D-glucose + ATP = D-glucose 6-phosphate + ADP + H(+). It functions in the pathway carbohydrate metabolism; hexose metabolism. The protein operates within carbohydrate degradation; glycolysis; D-glyceraldehyde 3-phosphate and glycerone phosphate from D-glucose: step 1/4. In terms of biological role, catalyzes the phosphorylation of various hexoses to hexose 6-phosphate. The chain is Hexokinase (HXK) from Toxoplasma gondii.